Reading from the N-terminus, the 549-residue chain is Cation/acetate symporter ActP (549 aa).

13 helical membrane-spanning segments follow: residues 33 to 53 (WQAIIMFLIFVVFTLGITYWA), 77 to 97 (LAIAGDYMSAASFLGISALVF), 103 to 123 (GLIYSLGFLVGWPIILFLIAE), 148 to 168 (ILSACGSLVVVALYLIAQMVG), 183 to 203 (IAVVLVGVLMMMYVLFGGMLA), 206 to 226 (WVQIIKAVLLLFGASFMAFMV), 262 to 282 (ISALSLGLGLMFGTAGLPHIL), 303 to 323 (GFMGYFYILTFIIGFGAIMLV), 355 to 375 (LFLGFISAVAFATILAVVAGL), 404 to 424 (VSKITVLILGVIAIILGVLFE), 428 to 448 (IAFMVGLAFAIAASCNFPIIL), 464 to 484 (GGWLGLITAVVLMILGPTIWV), and 493 to 513 (IFPYEYPALFSISVAFLGIWF).

It belongs to the sodium:solute symporter (SSF) (TC 2.A.21) family.

It localises to the cell inner membrane. Transports acetate. This is Cation/acetate symporter ActP from Escherichia coli O17:K52:H18 (strain UMN026 / ExPEC).